A 248-amino-acid polypeptide reads, in one-letter code: Probable septum site-determining protein MinC (248 aa).

A disordered region spans residues 94 to 125 (GMPPAMRGGQPAADFEAPAGEPQANPGAPEPQ).

Belongs to the MinC family. As to quaternary structure, interacts with MinD and FtsZ.

Its function is as follows. Cell division inhibitor that blocks the formation of polar Z ring septums. Rapidly oscillates between the poles of the cell to destabilize FtsZ filaments that have formed before they mature into polar Z rings. Prevents FtsZ polymerization. In Brucella abortus (strain S19), this protein is Probable septum site-determining protein MinC.